A 316-amino-acid chain; its full sequence is Phosducin-like protein 1 (316 aa).

The disordered stretch occupies residues 1-61; the sequence is MEQNILNSIL…EDGDKEYEVD (61 aa). Basic and acidic residues predominate over residues 12–41; sequence KFGDGDQERSDIRHNDSGDENDNHSDHEGN. The span at 49 to 61 shows a compositional bias: acidic residues; sequence EGNEDGDKEYEVD. Residues 95–290 form the Phosducin domain; that stretch reads SDYAEHREKQ…LLSSYDIIPN (196 aa). The stretch at 102-156 forms a coiled coil; sequence EKQKQKYLQKKYETQKMLEKMCFTTRDQPPPTEEENQLDSDDDDLERIRKARMEQ. Residues 175 to 316 form a thioredoxin fold region; it reads FGYFKQIDSS…RPESDDDNDD (142 aa). The tract at residues 293-316 is disordered; the sequence is KAKNSNWETSLSRKRPESDDDNDD.

It belongs to the phosducin family.

It is found in the cytoplasm. In terms of biological role, required for normal chemotaxis in response to cAMP and folate. Required for the heterodimerization of the G protein beta and gamma subunits gpbA and gpgA, which is itself thought to be necessary for prenylation of the gamma subunit gpgA and its association with plasma membranes. This Dictyostelium discoideum (Social amoeba) protein is Phosducin-like protein 1 (phlp1).